Consider the following 533-residue polypeptide: D-3-phosphoglycerate dehydrogenase (533 aa).

Ala2 bears the N-acetylalanine mark. Ser14 bears the Phosphoserine mark. Position 21 is an N6-acetyllysine; alternate (Lys21). Residue Lys21 forms a Glycyl lysine isopeptide (Lys-Gly) (interchain with G-Cter in SUMO1); alternate linkage. Lys21 is covalently cross-linked (Glycyl lysine isopeptide (Lys-Gly) (interchain with G-Cter in SUMO2); alternate). N6-acetyllysine is present on Lys58. NAD(+) is bound by residues Thr78, 155–156 (RI), Asp175, Thr207, 234–236 (CAR), and Asp260. Thr78 carries the phosphothreonine modification. Arg236 is an active-site residue. Glu265 is an active-site residue. Catalysis depends on His283, which acts as the Proton donor. 283–286 (HLGA) is a binding site for NAD(+).

The protein belongs to the D-isomer specific 2-hydroxyacid dehydrogenase family. In terms of assembly, homotetramer.

The catalysed reaction is (2R)-3-phosphoglycerate + NAD(+) = 3-phosphooxypyruvate + NADH + H(+). It carries out the reaction (R)-2-hydroxyglutarate + NAD(+) = 2-oxoglutarate + NADH + H(+). The enzyme catalyses (S)-malate + NAD(+) = oxaloacetate + NADH + H(+). It functions in the pathway amino-acid biosynthesis; L-serine biosynthesis; L-serine from 3-phospho-D-glycerate: step 1/3. In terms of biological role, catalyzes the reversible oxidation of 3-phospho-D-glycerate to 3-phosphonooxypyruvate, the first step of the phosphorylated L-serine biosynthesis pathway. Also catalyzes the reversible oxidation of 2-hydroxyglutarate to 2-oxoglutarate and the reversible oxidation of (S)-malate to oxaloacetate. The protein is D-3-phosphoglycerate dehydrogenase (PHGDH) of Homo sapiens (Human).